Reading from the N-terminus, the 534-residue chain is Arginine--tRNA ligase (534 aa).

Residues Ala-120–His-130 carry the 'HIGH' region motif.

This sequence belongs to the class-I aminoacyl-tRNA synthetase family. As to quaternary structure, monomer.

It is found in the cytoplasm. The catalysed reaction is tRNA(Arg) + L-arginine + ATP = L-arginyl-tRNA(Arg) + AMP + diphosphate. The polypeptide is Arginine--tRNA ligase (Mesomycoplasma hyopneumoniae (strain 232) (Mycoplasma hyopneumoniae)).